A 350-amino-acid chain; its full sequence is Farnesyl pyrophosphate synthase (350 aa).

The isopentenyl diphosphate site is built by Lys-55, Arg-58, and Gln-94. Mg(2+)-binding residues include Asp-101 and Asp-105. Residue Arg-110 participates in dimethylallyl diphosphate binding. Arg-111 contacts isopentenyl diphosphate. The dimethylallyl diphosphate site is built by Lys-198, Thr-199, Gln-237, Lys-254, and Lys-263.

This sequence belongs to the FPP/GGPP synthase family. The cofactor is Mg(2+).

Its subcellular location is the cytoplasm. The enzyme catalyses isopentenyl diphosphate + dimethylallyl diphosphate = (2E)-geranyl diphosphate + diphosphate. It catalyses the reaction isopentenyl diphosphate + (2E)-geranyl diphosphate = (2E,6E)-farnesyl diphosphate + diphosphate. It participates in isoprenoid biosynthesis; farnesyl diphosphate biosynthesis; farnesyl diphosphate from geranyl diphosphate and isopentenyl diphosphate: step 1/1. Its pathway is isoprenoid biosynthesis; geranyl diphosphate biosynthesis; geranyl diphosphate from dimethylallyl diphosphate and isopentenyl diphosphate: step 1/1. In terms of biological role, catalyzes the sequential condensation of isopentenyl pyrophosphate with the allylic pyrophosphates, dimethylallyl pyrophosphate, and then with the resultant geranylpyrophosphate to the ultimate product farnesyl pyrophosphate. This is Farnesyl pyrophosphate synthase (FPS) from Zea mays (Maize).